The sequence spans 470 residues: MAQMQIDPEAGRRIHGKPEPRVHIETFGCQMNEHDSEIMYGILAQMGYVKAQGPDDADLLLFNTCAVRESAVEHAFGRIGQLKPLKYTNPDLIIGVCGCVPQVEGQVERIKRMFPYLDLIFGTHNIHRLPELVERARSERETVVDVWESMGDDFPDILPAAREGDLKAWVTIMYGCDKHCTYCIVPTTRGKERSRPYEVILAEVQELARQGFKEITLLGQNVNAYGKDLYGRHGEGAFDFGDLIELIDRNSPGIERIRFTTNHPKDFTRKMVEQIARAEKVCEWFHLPVQSGSDSVLRRMKRSYNRKQYLRLVGWIRELIPDAVITTDIIVGFPGETEEEFQETLSLVEEVQYDAAFMFMYSERAGTPAAQMEDRLSVPEKKERLQRLMEVQNRIARAKNEARVGKVYDILVEGLDKGKPDVVFGWTRGNILVTFPGDESLRGRIVPVRITRAGTWTLEGELVESPVTLA.

One can recognise an MTTase N-terminal domain in the interval 20-138 (PRVHIETFGC…LPELVERARS (119 aa)). 6 residues coordinate [4Fe-4S] cluster: cysteine 29, cysteine 65, cysteine 99, cysteine 176, cysteine 180, and cysteine 183. Residues 162-398 (REGDLKAWVT…MEVQNRIARA (237 aa)) enclose the Radical SAM core domain. The region spanning 401-464 (EARVGKVYDI…TWTLEGELVE (64 aa)) is the TRAM domain.

The protein belongs to the methylthiotransferase family. MiaB subfamily. Monomer. Requires [4Fe-4S] cluster as cofactor.

Its subcellular location is the cytoplasm. It catalyses the reaction N(6)-dimethylallyladenosine(37) in tRNA + (sulfur carrier)-SH + AH2 + 2 S-adenosyl-L-methionine = 2-methylsulfanyl-N(6)-dimethylallyladenosine(37) in tRNA + (sulfur carrier)-H + 5'-deoxyadenosine + L-methionine + A + S-adenosyl-L-homocysteine + 2 H(+). Its function is as follows. Catalyzes the methylthiolation of N6-(dimethylallyl)adenosine (i(6)A), leading to the formation of 2-methylthio-N6-(dimethylallyl)adenosine (ms(2)i(6)A) at position 37 in tRNAs that read codons beginning with uridine. The chain is tRNA-2-methylthio-N(6)-dimethylallyladenosine synthase from Symbiobacterium thermophilum (strain DSM 24528 / JCM 14929 / IAM 14863 / T).